We begin with the raw amino-acid sequence, 342 residues long: Phosphate acyltransferase (342 aa).

This sequence belongs to the PlsX family. In terms of assembly, homodimer. Probably interacts with PlsY.

It is found in the cytoplasm. The enzyme catalyses a fatty acyl-[ACP] + phosphate = an acyl phosphate + holo-[ACP]. It functions in the pathway lipid metabolism; phospholipid metabolism. Catalyzes the reversible formation of acyl-phosphate (acyl-PO(4)) from acyl-[acyl-carrier-protein] (acyl-ACP). This enzyme utilizes acyl-ACP as fatty acyl donor, but not acyl-CoA. The chain is Phosphate acyltransferase from Alkalilimnicola ehrlichii (strain ATCC BAA-1101 / DSM 17681 / MLHE-1).